The sequence spans 338 residues: tRNA N6-adenosine threonylcarbamoyltransferase (338 aa).

Fe cation is bound by residues H111 and H115. Substrate contacts are provided by residues 134-138 (LVSGG), D167, G180, and N272. D300 contributes to the Fe cation binding site.

The protein belongs to the KAE1 / TsaD family. Fe(2+) serves as cofactor.

The protein resides in the cytoplasm. It carries out the reaction L-threonylcarbamoyladenylate + adenosine(37) in tRNA = N(6)-L-threonylcarbamoyladenosine(37) in tRNA + AMP + H(+). Functionally, required for the formation of a threonylcarbamoyl group on adenosine at position 37 (t(6)A37) in tRNAs that read codons beginning with adenine. Is involved in the transfer of the threonylcarbamoyl moiety of threonylcarbamoyl-AMP (TC-AMP) to the N6 group of A37, together with TsaE and TsaB. TsaD likely plays a direct catalytic role in this reaction. The polypeptide is tRNA N6-adenosine threonylcarbamoyltransferase (Nitrosomonas eutropha (strain DSM 101675 / C91 / Nm57)).